The sequence spans 582 residues: Poly(A) RNA polymerase, mitochondrial (582 aa).

A mitochondrion-targeting transit peptide spans 1 to 37; the sequence is MAVPGVGLLTRLNLCARRRTRVQRPIVRLLSCPGTVA. Lys90 carries the post-translational modification N6-acetyllysine. Residues 107 to 109 and 241 to 242 each bind ATP; these read YES and GC. Positions 243 and 245 each coordinate Mg(2+). The 47-residue stretch at 437 to 483 folds into the PAP-associated domain; that stretch reads LELLLKEFFEYFGNFAFDKNSINIRQGREQNKPDSSPLYIQNPFETS.

This sequence belongs to the DNA polymerase type-B-like family. Homodimer. Mg(2+) serves as cofactor. Requires Mn(2+) as cofactor. In terms of tissue distribution, ubiquitous, with stronger expression in tissues with high energy requirements: heart, brain, and skeletal muscle.

Its subcellular location is the cytoplasm. The protein localises to the mitochondrion. The enzyme catalyses RNA(n) + ATP = RNA(n)-3'-adenine ribonucleotide + diphosphate. In terms of biological role, polymerase that creates the 3' poly(A) tail of mitochondrial transcripts. Can use all four nucleotides, but has higher activity with ATP and UTP (in vitro). Plays a role in replication-dependent histone mRNA degradation. May be involved in the terminal uridylation of mature histone mRNAs before their degradation is initiated. Might be responsible for the creation of some UAA stop codons which are not encoded in mtDNA. The sequence is that of Poly(A) RNA polymerase, mitochondrial (MTPAP) from Homo sapiens (Human).